A 931-amino-acid chain; its full sequence is Scaffold attachment factor B1 (931 aa).

The span at 1–24 (MAETLSGLGDSGAASAAAVSSAAS) shows a compositional bias: low complexity. Residues 1–35 (MAETLSGLGDSGAASAAAVSSAASETGTRRLSDLR) form a disordered region. Residue alanine 2 is modified to N-acetylalanine. Phosphoserine occurs at positions 24 and 55. Positions 31 to 65 (LSDLRVIDLRAELRKRNLTSSGNKSVLMERLKKAI) constitute an SAP domain. Positions 64-121 (AIEEEGGNPDEIEVISEGNKKMPKRPSKGKKPEDEGVEDNGLEENSGDGQEDVETSLE) are disordered. A compositionally biased stretch (acidic residues) spans 67–77 (EEGGNPDEIEV). Serine 79 is modified (phosphoserine). The span at 98 to 118 (EGVEDNGLEENSGDGQEDVET) shows a compositional bias: acidic residues. Glycyl lysine isopeptide (Lys-Gly) (interchain with G-Cter in SUMO2) cross-links involve residues lysine 171 and lysine 185. Phosphoserine is present on residues serine 194, serine 196, and serine 208. 2 disordered regions span residues 205 to 304 (EEAS…TRCQ) and 316 to 430 (KREP…GRNF). A compositionally biased stretch (basic and acidic residues) spans 224–233 (CKSEPVKEEG). Lysine 230 participates in a covalent cross-link: Glycyl lysine isopeptide (Lys-Gly) (interchain with G-Cter in SUMO). Acidic residues predominate over residues 267–287 (EEEEEEEEEEEQEEEQEEEGD). Lysine 316 is covalently cross-linked (Glycyl lysine isopeptide (Lys-Gly) (interchain with G-Cter in SUMO)). The span at 341 to 356 (EQSSTAAQLPETTSQE) shows a compositional bias: polar residues. The segment covering 368–380 (EPRDSKDDVKKFA) has biased composition (basic and acidic residues). Lysine 403 participates in a covalent cross-link: Glycyl lysine isopeptide (Lys-Gly) (interchain with G-Cter in SUMO2). 2 positions are modified to phosphoserine: serine 405 and serine 406. Residues 412-423 (DTKRLSREEKGR) are compositionally biased toward basic and acidic residues. Residue lysine 414 forms a Glycyl lysine isopeptide (Lys-Gly) (interchain with G-Cter in SUMO2) linkage. The RRM domain occupies 428-506 (RNFWVSGLSS…KMISVEKAKS (79 aa)). The residue at position 437 (serine 437) is a Phosphoserine. Basic and acidic residues-rich tracts occupy residues 500-573 (SVEK…ERSR) and 581-592 (GTERTVVMDKSK). Disordered stretches follow at residues 500–663 (SVEK…WERE), 691–720 (RLERERMHVEQERRREQERIHREREELRRQ), 759–843 (RYHS…PRRD), and 872–931 (RWQG…QQTQ). Glycyl lysine isopeptide (Lys-Gly) (interchain with G-Cter in SUMO2) cross-links involve residues lysine 505, lysine 536, lysine 565, and lysine 592. The interaction with POLR2A; SFRS1; SFRS9 and SFRS10 stretch occupies residues 550–816 (TDDGSTEKSK…RHGGPERHGR (267 aa)). A Glycyl lysine isopeptide (Lys-Gly) (interchain with G-Cter in SUMO1); alternate cross-link involves residue lysine 600. Lysine 600 is covalently cross-linked (Glycyl lysine isopeptide (Lys-Gly) (interchain with G-Cter in SUMO2); alternate). 4 positions are modified to phosphoserine: serine 602, serine 604, serine 623, and serine 626. Residues 603–663 (GSKERASKSQ…QRLQAQWERE (61 aa)) show a composition bias toward basic and acidic residues. The short motif at 621–638 (KRSVVSFDKVKESRKSRD) is the Nuclear localization signal element. At lysine 629 the chain carries N6-acetyllysine. Basic and acidic residues predominate over residues 759–820 (RYHSDFSRQD…PERHGRDSRD (62 aa)). Arginine 834 is modified (omega-N-methylarginine). Residues arginine 892, arginine 898, arginine 908, and arginine 914 each carry the asymmetric dimethylarginine modification.

As to quaternary structure, monomer and homodimer. Interacts with KHDRBS3. Interacts with CLK2. Interacts with POLR2A, ASF/SRSF1, SRp30c/SRFS9 and TRA2B/SFRS10. Interacts with SRPK1 and inhibits its activity. Interacts with RBMX. Interacts with FUS. Interacts with ZBED4. Post-translationally, phosphorylated by CDC-like kinase 2 (CLK2). In terms of processing, sumoylated by PIAS1 with SUMO1 and SUMO2/3, desumoylated by SENP1. Sumoylation is required for transcriptional repressor activity.

Its subcellular location is the nucleus. Its function is as follows. Binds to scaffold/matrix attachment region (S/MAR) DNA and forms a molecular assembly point to allow the formation of a 'transcriptosomal' complex (consisting of SR proteins and RNA polymerase II) coupling transcription and RNA processing. Functions as an estrogen receptor corepressor and can also bind to the HSP27 promoter and decrease its transcription. Thereby acts as a negative regulator of cell proliferation. When associated with RBMX, binds to and stimulates transcription from the SREBF1 promoter. This chain is Scaffold attachment factor B1 (Safb), found in Rattus norvegicus (Rat).